Here is a 166-residue protein sequence, read N- to C-terminus: Replication gene B protein (166 aa).

Its function is as follows. Required for lagging strand synthesis. Might interact with the host dnaB protein. The polypeptide is Replication gene B protein (B) (Escherichia phage P2 (Bacteriophage P2)).